The following is a 337-amino-acid chain: Monoacylglycerol lipase ABHD6 (337 aa).

Topologically, residues 1–8 (MDLDVVNM) are extracellular. The helical; Signal-anchor for type II membrane protein transmembrane segment at 9 to 29 (FVIAGGTLAIPILAFVASFLL) threads the bilayer. The Cytoplasmic segment spans residues 30–337 (WPSALIRIYY…HNTDNNKKLD (308 aa)). The region spanning 72–313 (PSILMLHGFS…CGHSVVMERP (242 aa)) is the AB hydrolase-1 domain. A (9Z)-octadecenoate-binding site is contributed by Phe80. The active-site Nucleophile is Ser148. Position 149 (Met149) interacts with (9Z)-octadecenoate. Catalysis depends on charge relay system residues Asp278 and His306. His306 is a (9Z)-octadecenoate binding site.

This sequence belongs to the AB hydrolase superfamily.

The protein localises to the late endosome membrane. Its subcellular location is the lysosome membrane. The protein resides in the mitochondrion membrane. It carries out the reaction Hydrolyzes glycerol monoesters of long-chain fatty acids.. The catalysed reaction is 1-octanoylglycerol + H2O = octanoate + glycerol + H(+). It catalyses the reaction 1-decanoylglycerol + H2O = decanoate + glycerol + H(+). The enzyme catalyses 1-dodecanoylglycerol + H2O = dodecanoate + glycerol + H(+). It carries out the reaction 1-tetradecanoylglycerol + H2O = tetradecanoate + glycerol + H(+). The catalysed reaction is 2-hexadecanoylglycerol + H2O = glycerol + hexadecanoate + H(+). It catalyses the reaction 2-(9Z-octadecenoyl)-glycerol + H2O = glycerol + (9Z)-octadecenoate + H(+). The enzyme catalyses 1-(9Z-octadecenoyl)-glycerol + H2O = glycerol + (9Z)-octadecenoate + H(+). It carries out the reaction 2-(9Z,12Z-octadecadienoyl)-glycerol + H2O = (9Z,12Z)-octadecadienoate + glycerol + H(+). The catalysed reaction is 2-(5Z,8Z,11Z,14Z-eicosatetraenoyl)-glycerol + H2O = glycerol + (5Z,8Z,11Z,14Z)-eicosatetraenoate + H(+). It catalyses the reaction 1-(5Z,8Z,11Z,14Z-eicosatetraenoyl)-glycerol + H2O = glycerol + (5Z,8Z,11Z,14Z)-eicosatetraenoate + H(+). The enzyme catalyses 1-(9Z,12Z-octadecadienoyl)-glycerol + H2O = (9Z,12Z)-octadecadienoate + glycerol + H(+). It carries out the reaction 3-(9Z-octadecenoyl)-sn-glycero-1-phospho-(3'-(9Z-octadecenoyl)-1'-sn-glycerol) + H2O = 3-(9Z-octadecenoyl)-sn-glycero-1-phospho-(1'-sn-glycerol) + (9Z)-octadecenoate + H(+). The catalysed reaction is (S,S)-2-(9Z-octadecenoyl)-sn-glycero-1-phospho-(2'-(9Z-octadecenoyl)-1'-sn-glycerol) + H2O = (S,S)-2-(9Z-octadecenoyl)-sn-glycero-1-phospho-(1'-sn-glycerol) + (9Z)-octadecenoate + H(+). It catalyses the reaction (R,R)-2-(9Z-octadecenoyl)-sn-glycero-3-phospho-(2'-(9Z-octadecenoyl)-3'-sn-glycerol) + H2O = (R,R)-2-(9Z-octadecenoyl)-sn-glycero-3-phospho-(3'-sn-glycerol) + (9Z)-octadecenoate + H(+). Its function is as follows. Lipase that preferentially hydrolysis medium-chain saturated monoacylglycerols including 2-arachidonoylglycerol. Through 2-arachidonoylglycerol degradation may regulate endocannabinoid signaling pathways. Also has a lysophosphatidyl lipase activity with a preference for lysophosphatidylglycerol among other lysophospholipids. Also able to degrade bis(monoacylglycero)phosphate (BMP) and constitutes the major enzyme for BMP catabolism. BMP, also known as lysobisphosphatidic acid, is enriched in late endosomes and lysosomes and plays a key role in the formation of intraluminal vesicles and in lipid sorting. The chain is Monoacylglycerol lipase ABHD6 from Homo sapiens (Human).